Here is a 133-residue protein sequence, read N- to C-terminus: Small ribosomal subunit protein uS8 (133 aa).

It belongs to the universal ribosomal protein uS8 family. In terms of assembly, part of the 30S ribosomal subunit. Contacts proteins S5 and S12.

Its function is as follows. One of the primary rRNA binding proteins, it binds directly to 16S rRNA central domain where it helps coordinate assembly of the platform of the 30S subunit. This chain is Small ribosomal subunit protein uS8, found in Chlamydia trachomatis serovar L2b (strain UCH-1/proctitis).